A 347-amino-acid polypeptide reads, in one-letter code: Probable dual-specificity RNA methyltransferase RlmN (347 aa).

The active-site Proton acceptor is the E91. One can recognise a Radical SAM core domain in the interval 97–327 (YKYGNSICVS…ATVRREMGSD (231 aa)). Residues C104 and C332 are joined by a disulfide bond. The [4Fe-4S] cluster site is built by C111, C115, and C118. Residues 158-159 (GE), S190, 213-215 (SLH), and N289 each bind S-adenosyl-L-methionine. The active-site S-methylcysteine intermediate is the C332.

It belongs to the radical SAM superfamily. RlmN family. [4Fe-4S] cluster serves as cofactor.

The protein resides in the cytoplasm. The enzyme catalyses adenosine(2503) in 23S rRNA + 2 reduced [2Fe-2S]-[ferredoxin] + 2 S-adenosyl-L-methionine = 2-methyladenosine(2503) in 23S rRNA + 5'-deoxyadenosine + L-methionine + 2 oxidized [2Fe-2S]-[ferredoxin] + S-adenosyl-L-homocysteine. It carries out the reaction adenosine(37) in tRNA + 2 reduced [2Fe-2S]-[ferredoxin] + 2 S-adenosyl-L-methionine = 2-methyladenosine(37) in tRNA + 5'-deoxyadenosine + L-methionine + 2 oxidized [2Fe-2S]-[ferredoxin] + S-adenosyl-L-homocysteine. Its function is as follows. Specifically methylates position 2 of adenine 2503 in 23S rRNA and position 2 of adenine 37 in tRNAs. The polypeptide is Probable dual-specificity RNA methyltransferase RlmN (Clostridium perfringens (strain SM101 / Type A)).